Reading from the N-terminus, the 187-residue chain is Ribonuclease HII (187 aa).

Residues 1–187 enclose the RNase H type-2 domain; that stretch reads MIILGIDEAG…YKPVQVLLNE (187 aa). The a divalent metal cation site is built by aspartate 7, glutamate 8, and aspartate 99.

Belongs to the RNase HII family. Mn(2+) serves as cofactor. Mg(2+) is required as a cofactor.

It is found in the cytoplasm. The enzyme catalyses Endonucleolytic cleavage to 5'-phosphomonoester.. Its function is as follows. Endonuclease that specifically degrades the RNA of RNA-DNA hybrids. This chain is Ribonuclease HII, found in Francisella tularensis subsp. tularensis (strain FSC 198).